Consider the following 65-residue polypeptide: Large ribosomal subunit protein bL35 (65 aa).

This sequence belongs to the bacterial ribosomal protein bL35 family.

In Parasynechococcus marenigrum (strain WH8102), this protein is Large ribosomal subunit protein bL35.